The chain runs to 644 residues: Interleukin-23 receptor (644 aa).

A signal peptide spans 1 to 23 (MSHLTLQLHVVIALYVLFRWCHG). At 24 to 374 (GITSINCSGD…PASGNHQDIG (351 aa)) the chain is on the extracellular side. 3 N-linked (GlcNAc...) asparagine glycosylation sites follow: asparagine 47, asparagine 130, and asparagine 232. Fibronectin type-III domains follow at residues 127-217 (APSN…LDDI) and 219-318 (IPSA…TSQE). The helical transmembrane segment at 375 to 395 (LLSGMVFLAIMLPIFSLIGIF) threads the bilayer. Over 396–644 (NRSLRIGIKR…HFSRISLFQK (249 aa)) the chain is Cytoplasmic.

Belongs to the type I cytokine receptor family. Type 2 subfamily. In terms of assembly, heterodimer with IL12RB1. In presence of IL23, the heterodimer forms the IL23 receptor. Interacts with JAK2 and in presence of IL23 with STAT3. In terms of processing, phosphorylated in response to IL23. In terms of tissue distribution, expressed by Th1, Th2 and dendritic cells.

It is found in the cell membrane. Functionally, associates with IL12RB1 to form the interleukin-23 receptor. Binds IL23 and mediates T-cells, NK cells and possibly certain macrophage/myeloid cells stimulation probably through activation of the Jak-Stat signaling cascade. IL23 functions in innate and adaptive immunity and may participate in acute response to infection in peripheral tissues. IL23 may be responsible for autoimmune inflammatory diseases and be important for tumorigenesis. In Mus musculus (Mouse), this protein is Interleukin-23 receptor (Il23r).